The following is a 181-amino-acid chain: Probable pyruvoyl-dependent arginine decarboxylase (181 aa).

The residue at position 43 (Ser-43) is a Pyruvic acid (Ser).

The protein belongs to the PdaD family. Pyruvate serves as cofactor.

The enzyme catalyses L-arginine + H(+) = agmatine + CO2. This is Probable pyruvoyl-dependent arginine decarboxylase from Chlorobium limicola (strain DSM 245 / NBRC 103803 / 6330).